Here is a 353-residue protein sequence, read N- to C-terminus: JmjC domain-containing protein E (353 aa).

Residues 138–348 (YYIQYQNNSL…ETTKYQKQIK (211 aa)) form the JmjC domain.

This Dictyostelium discoideum (Social amoeba) protein is JmjC domain-containing protein E (jcdE).